The chain runs to 218 residues: MGQKMNPLGFRLGITQNHRSHWFAQQKNYSEDLREDEKISNCIVNYIRRHMRSSSNHGGIARVEIRRKIDLIQVEIHIGFPNLLIENRGRGSEQLRTDVRNMLNPVDGKLNIAIVKVAKPYGEPNILAEFIALQLEDRVSLGRTVKRAIELAEQADIKGIQIQIAGRLDGNEIARVEWAREGRVPLQTIRAKIDHCYYPAQTIYGVLGIKIWIFGDEK.

A KH type-2 domain is found at 47-118 (IRRHMRSSSN…KLNIAIVKVA (72 aa)).

It belongs to the universal ribosomal protein uS3 family. In terms of assembly, part of the 30S ribosomal subunit.

Its subcellular location is the plastid. The protein localises to the chloroplast. This chain is Small ribosomal subunit protein uS3c (rps3), found in Cycas taitungensis (Prince sago).